Consider the following 248-residue polypeptide: MAGHSKWANIKHKKAKEDAKRGKIFTKLIREITVAARLGGGDKDANPRLRAAIATALANNMSKDTIERAVVKGAGGDESANVEEVRYEGYGPGGVAIIVDCMTDNRNRTVGEVRHAFTKSGGNLGTDGSVAYMFTKRGIISFAPGVDEDALMEVALEAGVEDIITHEDGSIDVYTDPHDFSDIQEVLIEKGFNSENAEVTFDAETKAELDTETAEKVMALIDKLEDLDDVQSVYSNANFTQELIEQIG.

Belongs to the TACO1 family.

The protein resides in the cytoplasm. The chain is Probable transcriptional regulatory protein FTM_1203 from Francisella tularensis subsp. mediasiatica (strain FSC147).